A 188-amino-acid polypeptide reads, in one-letter code: ATP synthase subunit b (188 aa).

The chain crosses the membrane as a helical span at residues 21 to 41 (ILPHLGELIVGIIFAIIIYAV).

This sequence belongs to the ATPase B chain family. In terms of assembly, F-type ATPases have 2 components, F(1) - the catalytic core - and F(0) - the membrane proton channel. F(1) has five subunits: alpha(3), beta(3), gamma(1), delta(1), epsilon(1). F(0) has three main subunits: a(1), b(2) and c(10-14). The alpha and beta chains form an alternating ring which encloses part of the gamma chain. F(1) is attached to F(0) by a central stalk formed by the gamma and epsilon chains, while a peripheral stalk is formed by the delta and b chains.

The protein resides in the cell membrane. Its function is as follows. F(1)F(0) ATP synthase produces ATP from ADP in the presence of a proton or sodium gradient. F-type ATPases consist of two structural domains, F(1) containing the extramembraneous catalytic core and F(0) containing the membrane proton channel, linked together by a central stalk and a peripheral stalk. During catalysis, ATP synthesis in the catalytic domain of F(1) is coupled via a rotary mechanism of the central stalk subunits to proton translocation. In terms of biological role, component of the F(0) channel, it forms part of the peripheral stalk, linking F(1) to F(0). This chain is ATP synthase subunit b, found in Kineococcus radiotolerans (strain ATCC BAA-149 / DSM 14245 / SRS30216).